Reading from the N-terminus, the 196-residue chain is ATP-dependent Clp protease proteolytic subunit (196 aa).

Serine 101 serves as the catalytic Nucleophile. The active site involves histidine 126.

Belongs to the peptidase S14 family. Component of the chloroplastic Clp protease core complex.

Its subcellular location is the plastid. The protein resides in the chloroplast stroma. The enzyme catalyses Hydrolysis of proteins to small peptides in the presence of ATP and magnesium. alpha-casein is the usual test substrate. In the absence of ATP, only oligopeptides shorter than five residues are hydrolyzed (such as succinyl-Leu-Tyr-|-NHMec, and Leu-Tyr-Leu-|-Tyr-Trp, in which cleavage of the -Tyr-|-Leu- and -Tyr-|-Trp bonds also occurs).. Cleaves peptides in various proteins in a process that requires ATP hydrolysis. Has a chymotrypsin-like activity. Plays a major role in the degradation of misfolded proteins. This is ATP-dependent Clp protease proteolytic subunit from Pleurastrum terricola (Filamentous green alga).